Here is a 124-residue protein sequence, read N- to C-terminus: Small ribosomal subunit protein uS12 (124 aa).

A 3-methylthioaspartic acid modification is found at aspartate 89.

The protein belongs to the universal ribosomal protein uS12 family. Part of the 30S ribosomal subunit. Contacts proteins S8 and S17. May interact with IF1 in the 30S initiation complex.

Its function is as follows. With S4 and S5 plays an important role in translational accuracy. In terms of biological role, interacts with and stabilizes bases of the 16S rRNA that are involved in tRNA selection in the A site and with the mRNA backbone. Located at the interface of the 30S and 50S subunits, it traverses the body of the 30S subunit contacting proteins on the other side and probably holding the rRNA structure together. The combined cluster of proteins S8, S12 and S17 appears to hold together the shoulder and platform of the 30S subunit. The sequence is that of Small ribosomal subunit protein uS12 from Erwinia tasmaniensis (strain DSM 17950 / CFBP 7177 / CIP 109463 / NCPPB 4357 / Et1/99).